A 232-amino-acid chain; its full sequence is Modulator of macroautophagy TMEM150B (232 aa).

Residues M1–L6 lie on the Cytoplasmic side of the membrane. Residues L7–V27 form a helical membrane-spanning segment. Residues S28–Q50 lie on the Extracellular side of the membrane. N-linked (GlcNAc...) asparagine glycans are attached at residues N29 and N33. The helical transmembrane segment at S51 to I71 threads the bilayer. Over R72 to S83 the chain is Cytoplasmic. The chain crosses the membrane as a helical span at residues H84–G104. Over N105–H115 the chain is Extracellular. Residues L116–I136 form a helical membrane-spanning segment. Over T137 to R153 the chain is Cytoplasmic. A helical transmembrane segment spans residues F154–G174. The Extracellular segment spans residues F175–S177. The helical transmembrane segment at A178–A198 threads the bilayer. Topologically, residues A199–Q232 are cytoplasmic.

This sequence belongs to the DRAM/TMEM150 family.

Its subcellular location is the cell membrane. The protein localises to the endosome membrane. It localises to the cytoplasmic vesicle. The protein resides in the autophagosome membrane. Its function is as follows. Modulator of macroautophagy that causes accumulation of autophagosomes under basal conditions and enhances autophagic flux. Represses cell death and promotes long-term clonogenic survival of cells grown in the absence of glucose in a macroautophagy-independent manner. May have some role in extracellular matrix engulfment or growth factor receptor recycling, both of which can modulate cell survival. This is Modulator of macroautophagy TMEM150B from Danio rerio (Zebrafish).